The following is a 547-amino-acid chain: Glutamyl-tRNA(Gln) amidotransferase subunit B, mitochondrial (547 aa).

This sequence belongs to the GatB/GatE family. GatB subfamily. As to quaternary structure, subunit of the heterotrimeric GatFAB amidotransferase (AdT) complex, composed of A, B and F subunits.

The protein resides in the mitochondrion. It carries out the reaction L-glutamyl-tRNA(Gln) + L-glutamine + ATP + H2O = L-glutaminyl-tRNA(Gln) + L-glutamate + ADP + phosphate + H(+). Its function is as follows. Allows the formation of correctly charged Gln-tRNA(Gln) through the transamidation of misacylated Glu-tRNA(Gln) in the mitochondria. The reaction takes place in the presence of glutamine and ATP through an activated gamma-phospho-Glu-tRNA(Gln). The chain is Glutamyl-tRNA(Gln) amidotransferase subunit B, mitochondrial from Lachancea thermotolerans (strain ATCC 56472 / CBS 6340 / NRRL Y-8284) (Yeast).